The primary structure comprises 221 residues: Interleukin-12 subunit alpha (221 aa).

The N-terminal stretch at 1 to 25 (MCPLRSLLLISTLVLLHHLPHLSLG) is a signal peptide. 3 disulfide bridges follow: C39–C112, C66–C198, and C87–C125. Residue N95 is glycosylated (N-linked (GlcNAc...) asparagine).

This sequence belongs to the IL-6 superfamily. In terms of assembly, heterodimer with IL12B; disulfide-linked. This heterodimer is known as interleukin IL-12. Heterodimer with EBI3/IL27B; not disulfide-linked. This heterodimer is known as interleukin IL-35. Interacts with NBR1; this interaction promotes IL-12 secretion.

The protein resides in the secreted. Functionally, heterodimerizes with IL12B to form the IL-12 cytokine or with EBI3/IL27B to form the IL-35 cytokine. IL-12 is primarily produced by professional antigen-presenting cells (APCs) such as B-cells and dendritic cells (DCs) as well as macrophages and granulocytes and regulates T-cell and natural killer-cell responses, induces the production of interferon-gamma (IFN-gamma), favors the differentiation of T-helper 1 (Th1) cells and is an important link between innate resistance and adaptive immunity. Mechanistically, exerts its biological effects through a receptor composed of IL12R1 and IL12R2 subunits. Binding to the receptor results in the rapid tyrosine phosphorylation of a number of cellular substrates including the JAK family kinases TYK2 and JAK2. In turn, recruited STAT4 gets phosphorylated and translocates to the nucleus where it regulates cytokine/growth factor responsive genes. As part of IL-35, plays essential roles in maintaining the immune homeostasis of the liver microenvironment and also functions as an immune-suppressive cytokine. Mediates biological events through unconventional receptors composed of IL12RB2 and gp130/IL6ST heterodimers or homodimers. Signaling requires the transcription factors STAT1 and STAT4, which form a unique heterodimer that binds to distinct DNA sites. This is Interleukin-12 subunit alpha (IL12A) from Bos taurus (Bovine).